Here is a 304-residue protein sequence, read N- to C-terminus: MPQQLSPINIETKKAISNARLKPLDIHYNESKPTTIQNTGKLVRINFKGGYISGGFLPNEYVLSSLHIYWGKEDDYGSNHLIDVYKYSGEINLVHWNKKKYSSYEEAKKHDDGLIIISIFLQVSDHKNVYFQKIVNQLDSIRSANTSAPFDSVFYLDNLLPSTLDYFTYLGTTINHSADAAWIIFPTPINIHSDQLSKFRTLLSSSNHDGKPHYITENYRNPYKLNDDTQVYYSGEIIRAATTSPARDNYFMRWLSDLRETCFSYYQKYIEGNKTFAIIAIVFVFILTAILFLMSRRYSREKQN.

The Alpha-carbonic anhydrase domain occupies 1–235; sequence MPQQLSPINI…NDDTQVYYSG (235 aa). At 1 to 275 the chain is on the virion surface side; it reads MPQQLSPINI…YQKYIEGNKT (275 aa). A helical transmembrane segment spans residues 276–294; it reads FAIIAIVFVFILTAILFLM. The Intravirion portion of the chain corresponds to 295 to 304; it reads SRRYSREKQN.

It belongs to the alpha-carbonic anhydrase family. As to quaternary structure, homodimer; disulfide-linked. In terms of processing, apparently non-glycosylated.

It is found in the virion membrane. In terms of biological role, binds to chondroitin sulfate on the cell surface to provide virion attachment to target cell. In Rabbitpox virus (strain Utrecht) (RPV), this protein is Cell surface-binding protein OPG105 (OPG105).